The chain runs to 84 residues: Large ribosomal subunit protein bL27 (84 aa).

The protein belongs to the bacterial ribosomal protein bL27 family.

This is Large ribosomal subunit protein bL27 from Karelsulcia muelleri (strain GWSS) (Sulcia muelleri).